The sequence spans 88 residues: Small ribosomal subunit protein uS17 (88 aa).

Belongs to the universal ribosomal protein uS17 family. Part of the 30S ribosomal subunit.

Functionally, one of the primary rRNA binding proteins, it binds specifically to the 5'-end of 16S ribosomal RNA. The polypeptide is Small ribosomal subunit protein uS17 (Levilactobacillus brevis (strain ATCC 367 / BCRC 12310 / CIP 105137 / JCM 1170 / LMG 11437 / NCIMB 947 / NCTC 947) (Lactobacillus brevis)).